The chain runs to 358 residues: MPAHILQEISGAYSATTTITAPPSGGQQNGGEKFEKSSHHWGADVRPELKDDLYDPTYQDDEGPPPKLEYVWRNIILMALLHLGALYGITLVPSCKLYTCLFAYLYYVISALGITAGAHRLWSHRTYKARLPLRLFLIIANTMAFQNDVYEWARDHRAHHKFSETHADPHNSRRGFFFSHVGWLLVRKHPAVKEKGGKLDMSDLKAEKLVMFQRRYYKPGLLLMCFVLPTLVPWYCWGETFVNSLCVSTFLRYAVVLNATWLVNSAAHLYGYRPYDKNISSRENILVSMGAVGEGFHNYHHAFPYDYSASEYRWHINFTTFFIDCMALLGLAYDRKRVSRAAVLARIKRTGDGSCKSG.

Topologically, residues 1–71 (MPAHILQEIS…EGPPPKLEYV (71 aa)) are cytoplasmic. The tract at residues 16 to 39 (TTTITAPPSGGQQNGGEKFEKSSH) is disordered. The helical transmembrane segment at 72–92 (WRNIILMALLHLGALYGITLV) threads the bilayer. Residue Asn74 participates in substrate binding. Residues 93-96 (PSCK) lie on the Lumenal side of the membrane. A helical membrane pass occupies residues 97–117 (LYTCLFAYLYYVISALGITAG). Residues 118 to 216 (AHRLWSHRTY…EKLVMFQRRY (99 aa)) lie on the Cytoplasmic side of the membrane. Fe cation contacts are provided by His119 and His124. Positions 119-124 (HRLWSH) match the Histidine box-1 motif. Substrate contacts are provided by Asn147, Arg154, and Asp155. The Fe cation site is built by His156, His159, and His160. The short motif at 156 to 160 (HRAHH) is the Histidine box-2 element. The substrate site is built by Arg187 and Lys188. The helical transmembrane segment at 217 to 236 (YKPGLLLMCFVLPTLVPWYC) threads the bilayer. The Lumenal segment spans residues 237–240 (WGET). A helical membrane pass occupies residues 241 to 262 (FVNSLCVSTFLRYAVVLNATWL). Trp261 contributes to the substrate binding site. The Cytoplasmic segment spans residues 263–358 (VNSAAHLYGY…RTGDGSCKSG (96 aa)). Fe cation contacts are provided by His268, His297, His300, and His301. The Histidine box-3 motif lies at 297–301 (HNYHH).

It belongs to the fatty acid desaturase type 1 family. Fe(2+) serves as cofactor. As to expression, detected in brain and skin. Highly expressed in brain, and detected at low levels in heart, stomach, lung and testis. Detected both in dermis and epidermis.

Its subcellular location is the endoplasmic reticulum membrane. It localises to the microsome membrane. The enzyme catalyses octadecanoyl-CoA + 2 Fe(II)-[cytochrome b5] + O2 + 2 H(+) = (9Z)-octadecenoyl-CoA + 2 Fe(III)-[cytochrome b5] + 2 H2O. It catalyses the reaction hexadecanoyl-CoA + 2 Fe(II)-[cytochrome b5] + O2 + 2 H(+) = (9Z)-hexadecenoyl-CoA + 2 Fe(III)-[cytochrome b5] + 2 H2O. Its function is as follows. Stearoyl-CoA desaturase that utilizes O(2) and electrons from reduced cytochrome b5 to introduce the first double bond into saturated fatty acyl-CoA substrates. Catalyzes the insertion of a cis double bond at the delta-9 position into fatty acyl-CoA substrates including palmitoyl-CoA and stearoyl-CoA. Gives rise to a mixture of 16:1 and 18:1 unsaturated fatty acids. Contributes to the biosynthesis of membrane phospholipids, cholesterol esters and triglycerides, especially during embryonic development and in neonates. Important for normal permeability barrier function of the skin in neonates. This Mus musculus (Mouse) protein is Stearoyl-CoA desaturase 2 (Scd2).